Reading from the N-terminus, the 336-residue chain is Dihydroorotate dehydrogenase (quinone) (336 aa).

FMN contacts are provided by residues Ala-62 to Lys-66 and Thr-86. Position 66 (Lys-66) interacts with substrate. Substrate is bound at residue Asn-111–Phe-115. Asn-139 and Asn-172 together coordinate FMN. A substrate-binding site is contributed by Asn-172. Ser-175 acts as the Nucleophile in catalysis. Asn-177 lines the substrate pocket. FMN-binding residues include Lys-217 and Thr-245. Asn-246–Thr-247 contributes to the substrate binding site. FMN-binding positions include Gly-268, Gly-297, and Tyr-318 to Ser-319.

The protein belongs to the dihydroorotate dehydrogenase family. Type 2 subfamily. As to quaternary structure, monomer. FMN is required as a cofactor.

It is found in the cell membrane. The catalysed reaction is (S)-dihydroorotate + a quinone = orotate + a quinol. The protein operates within pyrimidine metabolism; UMP biosynthesis via de novo pathway; orotate from (S)-dihydroorotate (quinone route): step 1/1. Catalyzes the conversion of dihydroorotate to orotate with quinone as electron acceptor. The polypeptide is Dihydroorotate dehydrogenase (quinone) (Salmonella gallinarum (strain 287/91 / NCTC 13346)).